The chain runs to 335 residues: Phosphate acyltransferase (335 aa).

Belongs to the PlsX family. Homodimer. Probably interacts with PlsY.

It is found in the cytoplasm. The enzyme catalyses a fatty acyl-[ACP] + phosphate = an acyl phosphate + holo-[ACP]. It functions in the pathway lipid metabolism; phospholipid metabolism. Catalyzes the reversible formation of acyl-phosphate (acyl-PO(4)) from acyl-[acyl-carrier-protein] (acyl-ACP). This enzyme utilizes acyl-ACP as fatty acyl donor, but not acyl-CoA. This chain is Phosphate acyltransferase, found in Streptococcus pyogenes serotype M18 (strain MGAS8232).